The primary structure comprises 103 residues: MSNQRIRIRLKAFDHRLIDQSTAEIVETAKRTGAQVRGPIPLPTRFERFTVLTSPHVNKDARDQYEIRTHKRLIDIVEPTDKTVDALMRLDLAAGVDVQISLG.

This sequence belongs to the universal ribosomal protein uS10 family. Part of the 30S ribosomal subunit.

Functionally, involved in the binding of tRNA to the ribosomes. This chain is Small ribosomal subunit protein uS10, found in Pseudoalteromonas translucida (strain TAC 125).